The following is a 345-amino-acid chain: Uroporphyrinogen decarboxylase (345 aa).

Substrate is bound by residues 28-32 (RQAGR), aspartate 77, tyrosine 152, serine 207, and histidine 321.

It belongs to the uroporphyrinogen decarboxylase family. Homodimer.

The protein resides in the cytoplasm. The enzyme catalyses uroporphyrinogen III + 4 H(+) = coproporphyrinogen III + 4 CO2. The protein operates within porphyrin-containing compound metabolism; protoporphyrin-IX biosynthesis; coproporphyrinogen-III from 5-aminolevulinate: step 4/4. Its function is as follows. Catalyzes the decarboxylation of four acetate groups of uroporphyrinogen-III to yield coproporphyrinogen-III. The polypeptide is Uroporphyrinogen decarboxylase (Arthrobacter sp. (strain FB24)).